The following is a 411-amino-acid chain: Gamma-glutamyl phosphate reductase (411 aa).

The protein belongs to the gamma-glutamyl phosphate reductase family.

The protein localises to the cytoplasm. The enzyme catalyses L-glutamate 5-semialdehyde + phosphate + NADP(+) = L-glutamyl 5-phosphate + NADPH + H(+). Its pathway is amino-acid biosynthesis; L-proline biosynthesis; L-glutamate 5-semialdehyde from L-glutamate: step 2/2. Its function is as follows. Catalyzes the NADPH-dependent reduction of L-glutamate 5-phosphate into L-glutamate 5-semialdehyde and phosphate. The product spontaneously undergoes cyclization to form 1-pyrroline-5-carboxylate. This Nautilia profundicola (strain ATCC BAA-1463 / DSM 18972 / AmH) protein is Gamma-glutamyl phosphate reductase.